Consider the following 98-residue polypeptide: NADH-ubiquinone oxidoreductase chain 4L (98 aa).

Helical transmembrane passes span Met1–Met21, Ser29–Leu49, and Ile61–Val81.

It belongs to the complex I subunit 4L family. Core subunit of respiratory chain NADH dehydrogenase (Complex I) which is composed of 45 different subunits.

Its subcellular location is the mitochondrion inner membrane. The enzyme catalyses a ubiquinone + NADH + 5 H(+)(in) = a ubiquinol + NAD(+) + 4 H(+)(out). Its function is as follows. Core subunit of the mitochondrial membrane respiratory chain NADH dehydrogenase (Complex I) which catalyzes electron transfer from NADH through the respiratory chain, using ubiquinone as an electron acceptor. Part of the enzyme membrane arm which is embedded in the lipid bilayer and involved in proton translocation. The chain is NADH-ubiquinone oxidoreductase chain 4L (MT-ND4L) from Otaria byronia (South American sea lion).